A 305-amino-acid chain; its full sequence is Putative S-adenosyl-L-methionine-dependent methyltransferase MAB_4607c (305 aa).

Residues Asp128 and Asp155–Leu156 contribute to the S-adenosyl-L-methionine site.

Belongs to the UPF0677 family.

Functionally, exhibits S-adenosyl-L-methionine-dependent methyltransferase activity. The polypeptide is Putative S-adenosyl-L-methionine-dependent methyltransferase MAB_4607c (Mycobacteroides abscessus (strain ATCC 19977 / DSM 44196 / CCUG 20993 / CIP 104536 / JCM 13569 / NCTC 13031 / TMC 1543 / L948) (Mycobacterium abscessus)).